Consider the following 142-residue polypeptide: Large ribosomal subunit protein uL13 (142 aa).

It belongs to the universal ribosomal protein uL13 family. Part of the 50S ribosomal subunit.

Its function is as follows. This protein is one of the early assembly proteins of the 50S ribosomal subunit, although it is not seen to bind rRNA by itself. It is important during the early stages of 50S assembly. This Psychrobacter sp. (strain PRwf-1) protein is Large ribosomal subunit protein uL13.